Reading from the N-terminus, the 629-residue chain is Arginine--tRNA ligase (629 aa).

A 'HIGH' region motif is present at residues 128–138 (VNPTKPLHMGH).

This sequence belongs to the class-I aminoacyl-tRNA synthetase family.

The protein localises to the cytoplasm. It carries out the reaction tRNA(Arg) + L-arginine + ATP = L-arginyl-tRNA(Arg) + AMP + diphosphate. The sequence is that of Arginine--tRNA ligase (argS) from Pyrococcus horikoshii (strain ATCC 700860 / DSM 12428 / JCM 9974 / NBRC 100139 / OT-3).